The sequence spans 401 residues: Homocysteine-responsive endoplasmic reticulum-resident ubiquitin-like domain member 2 protein (401 aa).

One can recognise a Ubiquitin-like domain in the interval 10–89 (VTLIIKAPNQ…HMVHLVCASR (80 aa)). The segment at 87–137 (ASRSPPSSPKSSTDGESHGALASSTNSNSDHSDSTTPSPSQESLSLVAGSS) is disordered. Composition is skewed to low complexity over residues 88-98 (SRSPPSSPKSS) and 109-126 (SSTN…PSPS). Residues 299-319 (FIMVMGAMLLVYLHQAGWFPF) traverse the membrane as a helical segment.

It localises to the membrane. In terms of biological role, could be involved in the unfolded protein response (UPR) pathway. The chain is Homocysteine-responsive endoplasmic reticulum-resident ubiquitin-like domain member 2 protein (Herpud2) from Rattus norvegicus (Rat).